A 452-amino-acid polypeptide reads, in one-letter code: Scaffold protein ILK (452 aa).

The residue at position 1 (methionine 1) is an N-acetylmethionine. 5 ANK repeats span residues 2 to 30 (DDIF…LNQG), 31 to 63 (DDHG…INVM), 64 to 96 (NRGD…INAV), 97 to 129 (NEHG…VSIC), and 130 to 174 (NKYG…GTTR). Residues 33–139 (HGFSPLHWAC…NKYGEMPVDK (107 aa)) form an interaction with LIMS1 region. At threonine 173 the chain carries Phosphothreonine; by PAK1. The interval 180-212 (GTLNKHSGIDFKQLNFLTKLNENHSGELWKGRW) is PH-like; mediates interaction with TGFB1I1. Position 186 is a phosphoserine (serine 186). One can recognise a Protein kinase domain in the interval 193-446 (LNFLTKLNEN…PKFDMIVPIL (254 aa)). ATP-binding residues include asparagine 200, asparagine 202, histidine 203, serine 204, and lysine 220. Serine 246 carries the post-translational modification Phosphoserine; by PAK1. ATP is bound by residues histidine 270, methionine 272, and asparagine 279. Residue aspartate 339 participates in Mg(2+) binding. Residue lysine 341 participates in ATP binding. The Nuclear localization signal motif lies at 363–371 (KKPEDTNRR). The residue at position 426 (lysine 426) is an N6-acetyllysine.

Belongs to the protein kinase superfamily. TKL Ser/Thr protein kinase family. In terms of assembly, component of the heterotrimeric IPP (ILK-PINCH-PARVIN) complex composed of ILK, LIMS1/PINCH and PARVA; the complex binds to F-actin via the C-terminal tail of LIMS1 and the N-terminal region of PARVA, promoting F-actin filament bundling. Formation of the IPP complex is dependent on protein kinase C and precedes integrin-mediated cell adhesion and spreading. ILK also interacts with LIMS2/PINCH2 and with PARVB and PARVG which may substitute for LIMS1 and PARVA in the IPP complex; PARVA and PARVB compete for the same binding site. Interaction with PARVG promotes the establishment of cell polarity required for leukocyte migration. Interacts with the cytoplasmic domain of integrin ITGB1 and may also interact with integrins ITGB2, ITGB3 and/or ITGB5. Interacts probably also with TGFB1I1. Interacts (via ANK repeats) with EPHA1 (via SAM domain); stimulated by EFNA1 but independent of the kinase activity of EPHA1. Interacts with FERMT2. Interacts with LIMD2; leading to activate the protein kinase activity. Interacts with PXN/PAXILLIN (via LD motif 4). Interacts with CCDC25 (via cytoplasmic region); initiating the ILK-PARVB cascade to induce cytoskeleton rearrangement and directional migration of cells. Interacts with IQGAP1; the interaction is required for localization of IQGAP1 to the cell cortex. In terms of processing, phosphorylation by PAK1 modulates ILK subcellular location by promoting its nuclear export. Highly expressed in heart followed by skeletal muscle, pancreas and kidney. Weakly expressed in placenta, lung and liver.

The protein resides in the cell junction. It is found in the focal adhesion. Its subcellular location is the cell membrane. It localises to the cell projection. The protein localises to the lamellipodium. The protein resides in the cytoplasm. It is found in the myofibril. Its subcellular location is the sarcomere. It localises to the nucleus. The protein localises to the cytoskeleton. The protein resides in the microtubule organizing center. It is found in the centrosome. Its subcellular location is the cell cortex. Its function is as follows. Scaffold protein which mediates protein-protein interactions during a range of cellular events including focal adhesion assembly, cell adhesion and cell migration. Regulates integrin-mediated signal transduction by contributing to inside-out integrin activation. Recruits PARVA and LIMS1/PITCH to form the heterotrimeric IPP (ILK-PINCH-PARVIN) complex which binds to F-actin via the C-terminal tail of LIMS1 and the N-terminal region of PARVA, promoting F-actin filament bundling, a process required to generate force for actin cytoskeleton reorganization and subsequent dynamic cell adhesion events such as cell spreading and migration. Binding to PARVA promotes effective assembly of ILK into focal adhesions while PARVA-bound ILK can simultaneously engage integrin-beta cytoplasmic tails to mediate cell adhesion. Plays a role with PARVG in promoting the cell adhesion and spreading of leukocytes. Acts as an upstream effector of both AKT1/PKB and GSK3. Mediates trafficking of caveolae to the cell surface in an ITGB1-dependent manner by promoting the recruitment of IQGAP1 to the cell cortex which cooperates with its effector DIAPH1 to locally stabilize microtubules and allow stable insertion of caveolae into the plasma membrane. Required for the maintenance of mitotic spindle integrity by promoting phosphorylation of TACC3 by AURKA. Associates with chromatin and may act as a negative regulator of transcription when located in the nucleus. This chain is Scaffold protein ILK, found in Homo sapiens (Human).